The chain runs to 531 residues: GMP synthase [glutamine-hydrolyzing] (531 aa).

Positions 20-213 (KILIVDFGSQ…VRKVAGLKGD (194 aa)) constitute a Glutamine amidotransferase type-1 domain. The active-site Nucleophile is Cys97. Residues His187 and Glu189 contribute to the active site. A GMPS ATP-PPase domain is found at 214 to 406 (WTMRAFREEA…LGLPDVFVGR (193 aa)). 241–247 (SGGVDSA) serves as a coordination point for ATP.

As to quaternary structure, homodimer.

The enzyme catalyses XMP + L-glutamine + ATP + H2O = GMP + L-glutamate + AMP + diphosphate + 2 H(+). It functions in the pathway purine metabolism; GMP biosynthesis; GMP from XMP (L-Gln route): step 1/1. In terms of biological role, catalyzes the synthesis of GMP from XMP. The sequence is that of GMP synthase [glutamine-hydrolyzing] from Afipia carboxidovorans (strain ATCC 49405 / DSM 1227 / KCTC 32145 / OM5) (Oligotropha carboxidovorans).